The primary structure comprises 364 residues: Dihydroorotate dehydrogenase (quinone) (364 aa).

FMN is bound by residues 61-65 (AGYDK) and threonine 85. Lysine 65 is a binding site for substrate. 110-114 (NRLGF) provides a ligand contact to substrate. Positions 139 and 170 each coordinate FMN. Asparagine 170 provides a ligand contact to substrate. Serine 173 serves as the catalytic Nucleophile. Position 175 (asparagine 175) interacts with substrate. FMN contacts are provided by lysine 215 and serine 243. Position 244-245 (244-245 (NT)) interacts with substrate. Residues glycine 266, glycine 295, and 316–317 (YT) contribute to the FMN site.

The protein belongs to the dihydroorotate dehydrogenase family. Type 2 subfamily. Monomer. The cofactor is FMN.

It localises to the cell membrane. The catalysed reaction is (S)-dihydroorotate + a quinone = orotate + a quinol. It participates in pyrimidine metabolism; UMP biosynthesis via de novo pathway; orotate from (S)-dihydroorotate (quinone route): step 1/1. Its function is as follows. Catalyzes the conversion of dihydroorotate to orotate with quinone as electron acceptor. The chain is Dihydroorotate dehydrogenase (quinone) from Brucella canis (strain ATCC 23365 / NCTC 10854 / RM-666).